The primary structure comprises 37 residues: Large ribosomal subunit protein bL36 (37 aa).

It belongs to the bacterial ribosomal protein bL36 family.

The protein is Large ribosomal subunit protein bL36 of Clostridium perfringens (strain ATCC 13124 / DSM 756 / JCM 1290 / NCIMB 6125 / NCTC 8237 / Type A).